A 285-amino-acid chain; its full sequence is Polyamine aminopropyltransferase (285 aa).

The region spanning D5–K241 is the PABS domain. S-methyl-5'-thioadenosine is bound at residue Q35. 2 residues coordinate spermidine: H66 and D90. Residues D110 and D141 to G142 each bind S-methyl-5'-thioadenosine. Catalysis depends on D160, which acts as the Proton acceptor. A spermidine-binding site is contributed by D160 to D163. P167 is an S-methyl-5'-thioadenosine binding site.

The protein belongs to the spermidine/spermine synthase family. As to quaternary structure, homodimer or homotetramer.

The protein localises to the cytoplasm. It catalyses the reaction S-adenosyl 3-(methylsulfanyl)propylamine + putrescine = S-methyl-5'-thioadenosine + spermidine + H(+). The protein operates within amine and polyamine biosynthesis; spermidine biosynthesis; spermidine from putrescine: step 1/1. Functionally, catalyzes the irreversible transfer of a propylamine group from the amino donor S-adenosylmethioninamine (decarboxy-AdoMet) to putrescine (1,4-diaminobutane) to yield spermidine. This is Polyamine aminopropyltransferase from Xylella fastidiosa (strain Temecula1 / ATCC 700964).